Consider the following 161-residue polypeptide: Lipoprotein LpqH (161 aa).

The N-terminal stretch at 1-21 is a signal peptide; sequence MNRQLRFAVAGPEILAAVVSG. Residues 21–46 show a composition bias toward low complexity; sequence GCSSGNKSAPSSSASSSSTSPSASSG. Positions 21-49 are disordered; that stretch reads GCSSGNKSAPSSSASSSSTSPSASSGGAA. C22 carries N-palmitoyl cysteine lipidation. C22 carries the S-diacylglycerol cysteine lipid modification.

It belongs to the mycobacterial 19 kDa antigen family. Post-translationally, modified by Lgt on Cys-22 with an S-linked diacylglycerol with a mixture of C16, C18 and C19 fatty acids, signal peptide is removed by LspA, modifed by Lnt with an amide-linked mixture of C16 and C19 fatty acids.

The protein localises to the cell membrane. Might be involved in ligand transport. A host TLR2 agonist, modifies host gene expression in response to pathogen. The sequence is that of Lipoprotein LpqH (lpqH) from Mycobacterium avium.